Consider the following 266-residue polypeptide: Small ribosomal subunit protein uS2 (266 aa).

It belongs to the universal ribosomal protein uS2 family.

The chain is Small ribosomal subunit protein uS2 from Corynebacterium diphtheriae (strain ATCC 700971 / NCTC 13129 / Biotype gravis).